Reading from the N-terminus, the 319-residue chain is 7,8-didemethyl-8-hydroxy-5-deazariboflavin synthase (319 aa).

Residues 6 to 236 (VTYSPAFTLV…AEITIQIPPN (231 aa)) enclose the Radical SAM core domain. [4Fe-4S] cluster contacts are provided by C20, C24, and C27.

The protein belongs to the radical SAM superfamily. CofG family. In terms of assembly, consists of two subunits, CofG and CofH. [4Fe-4S] cluster serves as cofactor.

The enzyme catalyses 5-amino-5-(4-hydroxybenzyl)-6-(D-ribitylimino)-5,6-dihydrouracil + S-adenosyl-L-methionine = 7,8-didemethyl-8-hydroxy-5-deazariboflavin + 5'-deoxyadenosine + L-methionine + NH4(+) + H(+). It participates in cofactor biosynthesis; coenzyme F0 biosynthesis. In terms of biological role, catalyzes the radical-mediated synthesis of 7,8-didemethyl-8-hydroxy-5-deazariboflavin from 5-amino-5-(4-hydroxybenzyl)-6-(D-ribitylimino)-5,6-dihydrouracil. This chain is 7,8-didemethyl-8-hydroxy-5-deazariboflavin synthase, found in Gloeobacter violaceus (strain ATCC 29082 / PCC 7421).